Here is a 176-residue protein sequence, read N- to C-terminus: ATP synthase subunit delta (176 aa).

It belongs to the ATPase delta chain family. F-type ATPases have 2 components, F(1) - the catalytic core - and F(0) - the membrane proton channel. F(1) has five subunits: alpha(3), beta(3), gamma(1), delta(1), epsilon(1). F(0) has three main subunits: a(1), b(2) and c(10-14). The alpha and beta chains form an alternating ring which encloses part of the gamma chain. F(1) is attached to F(0) by a central stalk formed by the gamma and epsilon chains, while a peripheral stalk is formed by the delta and b chains.

It is found in the cell inner membrane. Its function is as follows. F(1)F(0) ATP synthase produces ATP from ADP in the presence of a proton or sodium gradient. F-type ATPases consist of two structural domains, F(1) containing the extramembraneous catalytic core and F(0) containing the membrane proton channel, linked together by a central stalk and a peripheral stalk. During catalysis, ATP synthesis in the catalytic domain of F(1) is coupled via a rotary mechanism of the central stalk subunits to proton translocation. This protein is part of the stalk that links CF(0) to CF(1). It either transmits conformational changes from CF(0) to CF(1) or is implicated in proton conduction. The protein is ATP synthase subunit delta of Nitratiruptor sp. (strain SB155-2).